We begin with the raw amino-acid sequence, 506 residues long: Histidine ammonia-lyase (506 aa).

The segment at residues 143–145 (ASG) is a cross-link (5-imidazolinone (Ala-Gly)). The residue at position 144 (S144) is a 2,3-didehydroalanine (Ser).

It belongs to the PAL/histidase family. Contains an active site 4-methylidene-imidazol-5-one (MIO), which is formed autocatalytically by cyclization and dehydration of residues Ala-Ser-Gly.

Its subcellular location is the cytoplasm. It carries out the reaction L-histidine = trans-urocanate + NH4(+). The protein operates within amino-acid degradation; L-histidine degradation into L-glutamate; N-formimidoyl-L-glutamate from L-histidine: step 1/3. The sequence is that of Histidine ammonia-lyase from Salmonella paratyphi B (strain ATCC BAA-1250 / SPB7).